Here is a 188-residue protein sequence, read N- to C-terminus: Glutathione S-transferase 2 (188 aa).

Residues 2 to 79 enclose the GST N-terminal domain; it reads VHYKLMCFDV…FLARQYGYSG (78 aa). Residues lysine 43, 49 to 51, and 63 to 64 contribute to the glutathione site; these read GQL and QS. Positions 81–188 constitute a GST C-terminal domain; it reads TPTEEMQVDS…PHLNVFIRKL (108 aa).

This sequence belongs to the GST superfamily. Sigma family.

It carries out the reaction RX + glutathione = an S-substituted glutathione + a halide anion + H(+). Conjugation of reduced glutathione to a wide number of exogenous and endogenous hydrophobic electrophiles. This Caenorhabditis elegans protein is Glutathione S-transferase 2 (gst-2).